We begin with the raw amino-acid sequence, 203 residues long: MFDIGWTELLVIAVVLIVVVGPKDLPPMLRAFGKMTQRARKVAGDFRAQFDEALREAELDDVRQTISDAQKLNPVNSLREAMNPLRQMGNEIKADLQKATTVTENKTEVPPDAVAAPTPSMSLPETPPLVATPAPSEPVAAAVVQADTVAAKPKAVRKPRGKIADKVDAAAAVAVPVEKPKRTTAVRKPATLKKPAQTKKDEA.

The chain crosses the membrane as a helical span at residues M1–G21. The disordered stretch occupies residues K179 to A203.

It belongs to the TatB family. As to quaternary structure, the Tat system comprises two distinct complexes: a TatABC complex, containing multiple copies of TatA, TatB and TatC subunits, and a separate TatA complex, containing only TatA subunits. Substrates initially bind to the TatABC complex, which probably triggers association of the separate TatA complex to form the active translocon.

It is found in the cell inner membrane. In terms of biological role, part of the twin-arginine translocation (Tat) system that transports large folded proteins containing a characteristic twin-arginine motif in their signal peptide across membranes. Together with TatC, TatB is part of a receptor directly interacting with Tat signal peptides. TatB may form an oligomeric binding site that transiently accommodates folded Tat precursor proteins before their translocation. The sequence is that of Sec-independent protein translocase protein TatB from Rhizobium johnstonii (strain DSM 114642 / LMG 32736 / 3841) (Rhizobium leguminosarum bv. viciae).